Here is a 430-residue protein sequence, read N- to C-terminus: tRNA(Ile)-lysidine synthase (430 aa).

24 to 29 (SGGLDS) contributes to the ATP binding site.

Belongs to the tRNA(Ile)-lysidine synthase family.

The protein localises to the cytoplasm. It catalyses the reaction cytidine(34) in tRNA(Ile2) + L-lysine + ATP = lysidine(34) in tRNA(Ile2) + AMP + diphosphate + H(+). Ligates lysine onto the cytidine present at position 34 of the AUA codon-specific tRNA(Ile) that contains the anticodon CAU, in an ATP-dependent manner. Cytidine is converted to lysidine, thus changing the amino acid specificity of the tRNA from methionine to isoleucine. The protein is tRNA(Ile)-lysidine synthase of Haemophilus influenzae (strain ATCC 51907 / DSM 11121 / KW20 / Rd).